The following is an 84-amino-acid chain: Small ribosomal subunit protein bS20 (84 aa).

Belongs to the bacterial ribosomal protein bS20 family.

Functionally, binds directly to 16S ribosomal RNA. This chain is Small ribosomal subunit protein bS20, found in Lactiplantibacillus plantarum (strain ATCC BAA-793 / NCIMB 8826 / WCFS1) (Lactobacillus plantarum).